Reading from the N-terminus, the 320-residue chain is Pseudouridine-5'-phosphate glycosidase (320 aa).

Residue glutamate 25 is the Proton donor of the active site. 2 residues coordinate substrate: lysine 85 and valine 105. Aspartate 137 serves as a coordination point for Mn(2+). A substrate-binding site is contributed by 139–141 (SAD). Lysine 158 (nucleophile) is an active-site residue.

It belongs to the pseudouridine-5'-phosphate glycosidase family. In terms of assembly, homotrimer. Mn(2+) is required as a cofactor.

It carries out the reaction D-ribose 5-phosphate + uracil = psi-UMP + H2O. Catalyzes the reversible cleavage of pseudouridine 5'-phosphate (PsiMP) to ribose 5-phosphate and uracil. Functions biologically in the cleavage direction, as part of a pseudouridine degradation pathway. The sequence is that of Pseudouridine-5'-phosphate glycosidase from Rhodospirillum centenum (strain ATCC 51521 / SW).